Reading from the N-terminus, the 398-residue chain is Phosphoglycerate kinase (398 aa).

Substrate contacts are provided by residues 21-23 (DFN), R36, 59-62 (HLGR), R119, and R157. ATP-binding positions include K208, G296, E327, and 354 to 357 (GGDS).

Belongs to the phosphoglycerate kinase family. As to quaternary structure, monomer.

The protein resides in the cytoplasm. It carries out the reaction (2R)-3-phosphoglycerate + ATP = (2R)-3-phospho-glyceroyl phosphate + ADP. The protein operates within carbohydrate degradation; glycolysis; pyruvate from D-glyceraldehyde 3-phosphate: step 2/5. The protein is Phosphoglycerate kinase of Streptococcus equi subsp. zooepidemicus (strain MGCS10565).